The chain runs to 288 residues: MDELALLKRSDGPVTRTRLARDLTALGLGDGDTVMFHTRMSAVGYVAGGPETVIGALRDVVGERGTLMVTCGWNDAPPYDFTDWPQTWQDARRAEHPAYDPVLSEADHNNGRLPEALRRRPGAVRSRHPDASFAALGAAATALTADHPWDDPHGPDSPLARLVAMGGRVLLLGAPLEALTLLHHAEALADAPGKRFVDYEQPILVDGERVWRRFHDIDSEDGAFDYSALVPEGTEAFEIIGRDMRAAGIGRRGTVGAADSHLFEARDVVDFGVAWMEEKLGRERGPGG.

Belongs to the antibiotic N-acetyltransferase family.

The catalysed reaction is a 2-deoxystreptamine antibiotic + acetyl-CoA = an N(3)-acetyl-2-deoxystreptamine antibiotic + CoA + H(+). Its function is as follows. Resistance to paromomycin. The protein is Aminoglycoside N(3)-acetyltransferase VII (aacC7) of Streptomyces paromomycinus (Streptomyces rimosus subsp. paromomycinus).